A 529-amino-acid chain; its full sequence is Heat shock protein 60 (529 aa).

Positions 460–484 (YQATVQHPPPQSSYEEDGRRPPTQP) are disordered.

This Giardia intestinalis (Giardia lamblia) protein is Heat shock protein 60.